Reading from the N-terminus, the 417-residue chain is Serine hydroxymethyltransferase (417 aa).

(6S)-5,6,7,8-tetrahydrofolate-binding positions include L121 and 125–127 (GHL). K229 is subject to N6-(pyridoxal phosphate)lysine. 355-357 (SPF) is a binding site for (6S)-5,6,7,8-tetrahydrofolate.

This sequence belongs to the SHMT family. Homodimer. Requires pyridoxal 5'-phosphate as cofactor.

It localises to the cytoplasm. The enzyme catalyses (6R)-5,10-methylene-5,6,7,8-tetrahydrofolate + glycine + H2O = (6S)-5,6,7,8-tetrahydrofolate + L-serine. Its pathway is one-carbon metabolism; tetrahydrofolate interconversion. It participates in amino-acid biosynthesis; glycine biosynthesis; glycine from L-serine: step 1/1. In terms of biological role, catalyzes the reversible interconversion of serine and glycine with tetrahydrofolate (THF) serving as the one-carbon carrier. This reaction serves as the major source of one-carbon groups required for the biosynthesis of purines, thymidylate, methionine, and other important biomolecules. Also exhibits THF-independent aldolase activity toward beta-hydroxyamino acids, producing glycine and aldehydes, via a retro-aldol mechanism. In Xylella fastidiosa (strain M12), this protein is Serine hydroxymethyltransferase.